Consider the following 379-residue polypeptide: Stimulator of interferon genes protein (379 aa).

Over 1-23 (MPQDPSTRSSPARLLIPEPRAGR) the chain is Cytoplasmic. Residues 24–40 (ARHAACVLLAVCFVVLF) traverse the membrane as a helical segment. The Lumenal segment spans residues 41-50 (LSGEPLAPII). The chain crosses the membrane as a helical span at residues 51 to 75 (RSVCTQLAALQLGVLLKGCCCLAEE). Topologically, residues 76 to 97 (IFHLHSRHHGSLWQVLCSCFPP) are cytoplasmic. The chain crosses the membrane as a helical span at residues 98–111 (RWYLALLLVGGSAY). The Lumenal segment spans residues 112 to 121 (LDPPEDNGHS). The helical transmembrane segment at 122–139 (PRLALTLSCLCQLLVLAL) threads the bilayer. Residues 140–379 (GLQKLSAVEV…LPQPLRSDCP (240 aa)) are Cytoplasmic-facing. The segment at 158–345 (KNVAHGLAWS…WHLQQQQREE (188 aa)) is cyclic dinucleotide-binding domain (CBD). 3',3'-c-di-GMP contacts are provided by residues Ser-167, Tyr-172, 243–246 (RVYK), and Ser-268. 2',3'-cGAMP is bound by residues 167 to 172 (SYYIGY), 243 to 246 (RVYK), and Ser-268. The short motif at 363 to 366 (LQVS) is the pLxIS motif element. The residue at position 366 (Ser-366) is a Phosphoserine; by TBK1.

The protein belongs to the STING family. In terms of assembly, homodimer; forms a homodimer in absence of cyclic nucleotide (c-di-GMP or cGAMP). Homotetramer; in presence of cyclic nucleotide (c-di-GMP or cGAMP), forms tetramers and higher-order oligomers through side-by-side packing. Interacts (when phosphorylated) with IRF3; following activation and phosphorylation on the pLxIS motif by TBK1, recruits IRF3. In terms of processing, phosphorylation by TBK1 leads to activation and production of IFN-beta. Following cyclic nucleotide (c-di-GMP or cGAMP)-binding, activation and translocation from the endoplasmic reticulum, STING1 is phosphorylated by TBK1 at Ser-366 in the pLxIS motif. The phosphorylated pLxIS motif constitutes an IRF3-binding motif, leading to recruitment of the transcription factor IRF3 to induce type-I interferons and other cytokines.

The protein resides in the endoplasmic reticulum membrane. The protein localises to the cytoplasm. It is found in the perinuclear region. Its subcellular location is the endoplasmic reticulum-Golgi intermediate compartment membrane. It localises to the golgi apparatus membrane. The protein resides in the cytoplasmic vesicle. The protein localises to the autophagosome membrane. The catalysed reaction is H(+)(in) = H(+)(out). Facilitator of innate immune signaling that acts as a sensor of cytosolic DNA from bacteria and viruses and promotes the production of type I interferon (IFN-alpha and IFN-beta). Innate immune response is triggered in response to non-CpG double-stranded DNA from viruses and bacteria delivered to the cytoplasm. Acts by binding cyclic dinucleotides: recognizes and binds cyclic di-GMP (c-di-GMP), a second messenger produced by bacteria, and cyclic GMP-AMP (cGAMP), a messenger produced by CGAS in response to DNA virus in the cytosol. Upon binding of c-di-GMP or cGAMP, STING1 oligomerizes and is able to activate both NF-kappa-B and IRF3 transcription pathways to induce expression of type I interferon and exert a potent anti-viral state. Exhibits 2',3' phosphodiester linkage-specific ligand recognition: can bind both 2'-3' linked cGAMP and 3'-3' linked cGAMP but is preferentially activated by 2'-3' linked cGAMP. In addition to promote the production of type I interferons, plays a direct role in autophagy. Following cGAMP-binding, STING1 buds from the endoplasmic reticulum into COPII vesicles, which then form the endoplasmic reticulum-Golgi intermediate compartment (ERGIC). The ERGIC serves as the membrane source for LC3 lipidation, leading to formation of autophagosomes that target cytosolic DNA or DNA viruses for degradation by the lysosome. Promotes autophagy by acting as a proton channel that directs proton efflux from the Golgi to facilitate LC3 lipidation. The autophagy- and interferon-inducing activities can be uncoupled and autophagy induction is independent of TBK1 phosphorylation. This is Stimulator of interferon genes protein from Gallus gallus (Chicken).